A 178-amino-acid chain; its full sequence is Protein GrpE (178 aa).

Residues 1–22 (MSENQNPSPSPEEIEAAMSANA) are disordered.

Belongs to the GrpE family. As to quaternary structure, homodimer.

It localises to the cytoplasm. In terms of biological role, participates actively in the response to hyperosmotic and heat shock by preventing the aggregation of stress-denatured proteins, in association with DnaK and GrpE. It is the nucleotide exchange factor for DnaK and may function as a thermosensor. Unfolded proteins bind initially to DnaJ; upon interaction with the DnaJ-bound protein, DnaK hydrolyzes its bound ATP, resulting in the formation of a stable complex. GrpE releases ADP from DnaK; ATP binding to DnaK triggers the release of the substrate protein, thus completing the reaction cycle. Several rounds of ATP-dependent interactions between DnaJ, DnaK and GrpE are required for fully efficient folding. This chain is Protein GrpE, found in Acidovorax ebreus (strain TPSY) (Diaphorobacter sp. (strain TPSY)).